The following is an 843-amino-acid chain: Beta-mannosidase B (843 aa).

The active-site Proton donor is E432.

It belongs to the glycosyl hydrolase 2 family. Beta-mannosidase B subfamily.

The enzyme catalyses Hydrolysis of terminal, non-reducing beta-D-mannose residues in beta-D-mannosides.. The protein operates within glycan metabolism; N-glycan degradation. Its function is as follows. Exoglycosidase that cleaves the single beta-linked mannose residue from the non-reducing end of beta-mannosidic oligosaccharides of various complexity and length. Prefers mannobiose over mannotriose and has no activity against polymeric mannan. Is also severely restricted by galactosyl substitutions at the +1 subsite. Releases the terminal mannose residue from mannobiose, mannotriose and galactosyl-mannotriose (GM3), but not from galactosyl-mannobiose (GM2) or di-galactosyl-mannopentaose (G2M5). The protein is Beta-mannosidase B (mndB) of Emericella nidulans (strain FGSC A4 / ATCC 38163 / CBS 112.46 / NRRL 194 / M139) (Aspergillus nidulans).